Here is a 103-residue protein sequence, read N- to C-terminus: Large ribosomal subunit protein bL21 (103 aa).

It belongs to the bacterial ribosomal protein bL21 family. As to quaternary structure, part of the 50S ribosomal subunit. Contacts protein L20.

Functionally, this protein binds to 23S rRNA in the presence of protein L20. The protein is Large ribosomal subunit protein bL21 of Lactobacillus acidophilus (strain ATCC 700396 / NCK56 / N2 / NCFM).